The primary structure comprises 254 residues: Imidazole glycerol phosphate synthase subunit HisF (254 aa).

Residues aspartate 13 and aspartate 132 contribute to the active site.

This sequence belongs to the HisA/HisF family. Heterodimer of HisH and HisF.

It localises to the cytoplasm. It catalyses the reaction 5-[(5-phospho-1-deoxy-D-ribulos-1-ylimino)methylamino]-1-(5-phospho-beta-D-ribosyl)imidazole-4-carboxamide + L-glutamine = D-erythro-1-(imidazol-4-yl)glycerol 3-phosphate + 5-amino-1-(5-phospho-beta-D-ribosyl)imidazole-4-carboxamide + L-glutamate + H(+). The protein operates within amino-acid biosynthesis; L-histidine biosynthesis; L-histidine from 5-phospho-alpha-D-ribose 1-diphosphate: step 5/9. IGPS catalyzes the conversion of PRFAR and glutamine to IGP, AICAR and glutamate. The HisF subunit catalyzes the cyclization activity that produces IGP and AICAR from PRFAR using the ammonia provided by the HisH subunit. This chain is Imidazole glycerol phosphate synthase subunit HisF, found in Nautilia profundicola (strain ATCC BAA-1463 / DSM 18972 / AmH).